A 201-amino-acid chain; its full sequence is GTP-binding protein ryh1 (201 aa).

Residue 18–25 (GEQSVGKT) participates in GTP binding. Positions 40–48 (YQATIGIDF) match the Effector region motif. Residues 66–70 (DTAGQ) and 124–127 (NKTD) contribute to the GTP site. 2 S-geranylgeranyl cysteine lipidation sites follow: Cys-199 and Cys-201. A Cysteine methyl ester modification is found at Cys-201.

Belongs to the small GTPase superfamily. Rab family.

The protein localises to the endosome membrane. Its subcellular location is the golgi apparatus membrane. It is found in the nucleus. It localises to the cytoplasm. The protein resides in the cytosol. Has a role in retrograde traffricking of proteins from the endosome to the Golgi. Involved in protein transport to the plasma membrane. Involved in the secretory pathway where it has a role in acid phosphatase secretion. Required also in normal glycosylation trafficking pathways. The chain is GTP-binding protein ryh1 (ryh1) from Schizosaccharomyces pombe (strain 972 / ATCC 24843) (Fission yeast).